Consider the following 375-residue polypeptide: Pulmonary surfactant-associated protein D (375 aa).

An N-terminal signal peptide occupies residues 1–20; sequence MLLFLLSALVLLTQPLGYLE. C35 and C40 each carry S-nitrosocysteine. The disordered stretch occupies residues 45–221; that stretch reads SGLPGRDGRD…DKGAKGESGL (177 aa). In terms of domain architecture, Collagen-like spans 46-222; the sequence is GLPGRDGRDG…KGAKGESGLP (177 aa). Over residues 50 to 65 the composition is skewed to basic and acidic residues; that stretch reads RDGRDGREGPRGEKGD. Over residues 66–86 the composition is skewed to low complexity; the sequence is PGLPGAAGQAGMPGQAGPVGP. A 4-hydroxyproline modification is found at P78. A 5-hydroxylysine modification is found at K87. A glycan (N-linked (GlcNAc...) asparagine) is linked at N90. At P96 the chain carries 4-hydroxyproline. At K99 the chain carries 5-hydroxylysine. Over residues 105–114 the composition is skewed to pro residues; sequence SGPPGPPGVP. Low complexity-rich tracts occupy residues 116 to 132 and 138 to 150; these read PAGR…IGPQ and KGEA…VGAP. 4-hydroxyproline occurs at positions 171 and 177. Residues 204 to 216 show a composition bias toward basic and acidic residues; it reads KGDKGIPGDKGAK. Positions 223-252 form a coiled coil; it reads DVASLRQQVEALQGQVQHLQAAFSQYKKVE. Residues 260-375 form the C-type lectin domain; that stretch reads VGEKIFKTAG…GEKRLVVCEF (116 aa). 2 disulfide bridges follow: C281–C373 and C351–C365.

Belongs to the SFTPD family. In terms of assembly, oligomeric complex of 4 set of homotrimers. In terms of processing, the N-terminus is blocked. Hydroxylation on proline residues within the sequence motif, GXPG, is most likely to be 4-hydroxy as this fits the requirement for 4-hydroxylation in vertebrates. Post-translationally, S-nitrosylation at Cys-35 and Cys-40 alters the quaternary structure which results in a pro-inflammatory chemoattractive signaling activity with macrophages. In terms of tissue distribution, expressed in lung, brain, pancreas and adipose tissue (mainly mature adipocytes).

It is found in the secreted. The protein localises to the extracellular space. The protein resides in the extracellular matrix. Its subcellular location is the surface film. Contributes to the lung's defense against inhaled microorganisms, organic antigens and toxins. Interacts with compounds such as bacterial lipopolysaccharides, oligosaccharides and fatty acids and modulates leukocyte action in immune response. May participate in the extracellular reorganization or turnover of pulmonary surfactant. Binds strongly maltose residues and to a lesser extent other alpha-glucosyl moieties. The chain is Pulmonary surfactant-associated protein D (SFTPD) from Homo sapiens (Human).